A 534-amino-acid chain; its full sequence is CTP synthase (534 aa).

Residues 1–265 (MKYIVVTGGV…TTQLMKHLRL (265 aa)) form an amidoligase domain region. Ser12 is a binding site for CTP. Ser12 is a UTP binding site. Residue 13–18 (GLGKGI) participates in ATP binding. Residue Tyr53 coordinates L-glutamine. Asp70 provides a ligand contact to ATP. Positions 70 and 140 each coordinate Mg(2+). CTP contacts are provided by residues 147–149 (DIE), 186–191 (KTKPTQ), and Lys222. Residues 186-191 (KTKPTQ) and Lys222 contribute to the UTP site. Residues 289–530 (KLAIVGKYTN…VRAMCKYRKE (242 aa)) enclose the Glutamine amidotransferase type-1 domain. Gly352 is a binding site for L-glutamine. Cys379 serves as the catalytic Nucleophile; for glutamine hydrolysis. L-glutamine is bound by residues 380-383 (LGMQ), Glu403, and Arg460. Catalysis depends on residues His503 and Glu505.

Belongs to the CTP synthase family. In terms of assembly, homotetramer.

It catalyses the reaction UTP + L-glutamine + ATP + H2O = CTP + L-glutamate + ADP + phosphate + 2 H(+). The enzyme catalyses L-glutamine + H2O = L-glutamate + NH4(+). The catalysed reaction is UTP + NH4(+) + ATP = CTP + ADP + phosphate + 2 H(+). It functions in the pathway pyrimidine metabolism; CTP biosynthesis via de novo pathway; CTP from UDP: step 2/2. Its activity is regulated as follows. Allosterically activated by GTP, when glutamine is the substrate; GTP has no effect on the reaction when ammonia is the substrate. The allosteric effector GTP functions by stabilizing the protein conformation that binds the tetrahedral intermediate(s) formed during glutamine hydrolysis. Inhibited by the product CTP, via allosteric rather than competitive inhibition. Catalyzes the ATP-dependent amination of UTP to CTP with either L-glutamine or ammonia as the source of nitrogen. Regulates intracellular CTP levels through interactions with the four ribonucleotide triphosphates. The chain is CTP synthase from Methanosarcina mazei (strain ATCC BAA-159 / DSM 3647 / Goe1 / Go1 / JCM 11833 / OCM 88) (Methanosarcina frisia).